A 490-amino-acid polypeptide reads, in one-letter code: GTPase Der (490 aa).

EngA-type G domains lie at P3 to D166 and I196 to V369. Residues G9–S16, D56–I60, and N118–D121 contribute to the GTP site. Residues F162–G189 are disordered. The segment covering R164–G181 has biased composition (acidic residues). Residues G202–S209, D249–V253, and N314–D317 contribute to the GTP site. The KH-like domain occupies T370–E454. A disordered region spans residues G453–K490. Over residues N470–K490 the composition is skewed to basic residues.

It belongs to the TRAFAC class TrmE-Era-EngA-EngB-Septin-like GTPase superfamily. EngA (Der) GTPase family. In terms of assembly, associates with the 50S ribosomal subunit.

Functionally, GTPase that plays an essential role in the late steps of ribosome biogenesis. The sequence is that of GTPase Der from Pseudomonas fluorescens (strain Pf0-1).